The sequence spans 804 residues: Leucine--tRNA ligase (804 aa).

The 'HIGH' region motif lies at 40–51; the sequence is PYPSGAGLHVGH. The 'KMSKS' region motif lies at 576–580; it reads KMSKS. ATP is bound at residue lysine 579.

The protein belongs to the class-I aminoacyl-tRNA synthetase family.

The protein localises to the cytoplasm. It carries out the reaction tRNA(Leu) + L-leucine + ATP = L-leucyl-tRNA(Leu) + AMP + diphosphate. The chain is Leucine--tRNA ligase from Bacillus pumilus (strain SAFR-032).